The sequence spans 365 residues: Short-chain dehydrogenase iccH (365 aa).

3 residues coordinate NADP(+): Leu-16, Arg-52, and Asp-70. The N-linked (GlcNAc...) asparagine glycan is linked to Asn-90. The NADP(+) site is built by Asn-102, Tyr-221, Lys-225, and Ser-260. Tyr-221 serves as the catalytic Proton donor. The active-site Lowers pKa of active site Tyr is the Lys-225. A helical membrane pass occupies residues 267-287 (IWVMFLLMKFVLPLLAPLAVW). Asn-291 and Asn-324 each carry an N-linked (GlcNAc...) asparagine glycan.

It belongs to the short-chain dehydrogenases/reductases (SDR) family.

The protein resides in the membrane. The protein operates within mycotoxin biosynthesis. In terms of biological role, NADH-dependent flavin oxidoreductase; part of the gene cluster that mediates the biosynthesis of ilicicolin H, a 4-hydroxy-2-pyridonealkaloid that has potent and broad antifungal activities by inhibiting the mitochondrial respiration chain. IccA to iccE are sufficient for ilicicolin H biosynthesis and the roles of the remaining enzymes, iccF, iccG and iccH within the pathway have still to be determined. The biosynthesis of ilicicolin H starts with formation of the tetramic acid by the hybrid PKS-NRPS synthetase iccA with the partnering trans-enoyl reductase iccB since iccA lacks a designated enoylreductase (ER) domain. The cytochrome P450 monooxygenase iccC then catalyzes the ring expansion of the tetramate to the acyclic 2-pyridone. The pericyclase iccD further converts the acyclic 2-pyridone into 8-epi-ilicicolin H. Finally, the epimerase iccE converts 8-epi-ilicicolin H into ilicicolin H via epimerizationd. The chain is Short-chain dehydrogenase iccH from Talaromyces variabilis (Penicillium variabile).